Consider the following 449-residue polypeptide: uncharacterized protein (449 aa).

The protein localises to the mitochondrion. This is an uncharacterized protein from Podospora anserina (strain S / ATCC MYA-4624 / DSM 980 / FGSC 10383) (Pleurage anserina).